The sequence spans 426 residues: Glucan endo-1,3-beta-glucosidase 11 (426 aa).

An N-terminal signal peptide occupies residues 1–30 (MELTSFHRSSLLFLISLTLIILPTTTTSIG). An N-linked (GlcNAc...) asparagine glycan is attached at N112. The active-site Proton donor is E121. N-linked (GlcNAc...) asparagine glycosylation occurs at N126. Residue E266 is the Nucleophile of the active site. Residues 360–372 (GGGTGGGNSSSGG) show a composition bias toward gly residues. Positions 360 to 389 (GGGTGGGNSSSGGGRDKSPVFPVSPVAPDS) are disordered. N367 carries an N-linked (GlcNAc...) asparagine glycan. S398 carries the GPI-anchor amidated serine lipid modification. Positions 399–426 (ASPVTGKRKGKGAILSLVVSMLLARHLL) are cleaved as a propeptide — removed in mature form.

This sequence belongs to the glycosyl hydrolase 17 family.

The protein resides in the secreted. The protein localises to the cell wall. It localises to the cell membrane. The enzyme catalyses Hydrolysis of (1-&gt;3)-beta-D-glucosidic linkages in (1-&gt;3)-beta-D-glucans.. This is Glucan endo-1,3-beta-glucosidase 11 from Arabidopsis thaliana (Mouse-ear cress).